The chain runs to 403 residues: G2/mitotic-specific cyclin-B3 (403 aa).

Disordered regions lie at residues 1-86 and 102-122; these read MPVA…APPA and RKTPPADVPVEPEKDSVPEEP. Polar residues predominate over residues 7 to 25; that stretch reads SKAQSSKQPRASKAPSVTE. Positions 51–59 match the D-box motif; the sequence is RSAFGDITN.

Belongs to the cyclin family. Cyclin AB subfamily. As to quaternary structure, interacts with the CDK1 and CDK2 protein kinases. Ubiquitinated, leading to its degradation.

The protein resides in the nucleus. In terms of biological role, cyclins are positive regulatory subunits of the cyclin-dependent kinases (CDKs), and thereby play an essential role in the control of the cell cycle, notably via their destruction during cell division. Could be involved at the G2/M (mitosis or meiosis) transition. G2/M cyclins accumulate steadily during G2 and are abruptly destroyed at mitosis. This Gallus gallus (Chicken) protein is G2/mitotic-specific cyclin-B3 (CCNB3).